Here is a 113-residue protein sequence, read N- to C-terminus: Putative pterin-4-alpha-carbinolamine dehydratase (113 aa).

It belongs to the pterin-4-alpha-carbinolamine dehydratase family.

The enzyme catalyses (4aS,6R)-4a-hydroxy-L-erythro-5,6,7,8-tetrahydrobiopterin = (6R)-L-erythro-6,7-dihydrobiopterin + H2O. This chain is Putative pterin-4-alpha-carbinolamine dehydratase, found in Legionella pneumophila (strain Paris).